Here is a 123-residue protein sequence, read N- to C-terminus: F-box protein PP2-B3 (123 aa).

One can recognise an F-box domain in the interval 10-56; sequence PSPFDGLPENCISNIISFTTPRDACFAASVSKAFESAVQSDSVWEKF.

This Arabidopsis thaliana (Mouse-ear cress) protein is F-box protein PP2-B3 (PP2B3).